We begin with the raw amino-acid sequence, 474 residues long: Stabilizer of axonemal microtubules 1 (474 aa).

12 mn regions span residues 30-64 (KPCL…KGSI), 65-97 (PMEG…PSEE), 98-131 (NMDL…PYSN), 132-165 (KMEY…PASV), 166-199 (RFDN…LCNI), 200-232 (PLED…PCEI), 233-266 (PFES…GLDM), 267-299 (PFSN…PPED), 300-332 (SMDL…RKSG), 333-366 (RFEG…FPTE), 367-400 (PLDC…RGNV), and 401-434 (PVEG…TFEE). The segment at 318-350 (PARSCRPAPQIRKSGRFEGSSTTKDDYKQWSSM) is disordered. The disordered stretch occupies residues 444 to 474 (KPVSQAGSQQSSHLSVDDSENPSQRKLEVSA). Positions 448–457 (QAGSQQSSHL) are enriched in polar residues.

Belongs to the FAM154 family. Associates with microtubules via the Mn regions.

It is found in the cytoplasm. Its subcellular location is the cytoskeleton. The protein resides in the microtubule organizing center. It localises to the centrosome. The protein localises to the centriole. It is found in the cilium basal body. Its subcellular location is the cilium axoneme. The protein resides in the flagellum axoneme. Functionally, may play a role in the regulation of cilium length. Stabilizes microtubules at low temperature. The protein is Stabilizer of axonemal microtubules 1 (SAXO1) of Macaca fascicularis (Crab-eating macaque).